Consider the following 610-residue polypeptide: UvrABC system protein C (610 aa).

The region spanning 16–94 (SQPGVYRMYD…IKLYQPRYNV (79 aa)) is the GIY-YIG domain. In terms of domain architecture, UVR spans 204-239 (QQVLTQLISRMEEASRLLHFEDAARIRDQIQAVRRV).

This sequence belongs to the UvrC family. Interacts with UvrB in an incision complex.

Its subcellular location is the cytoplasm. Functionally, the UvrABC repair system catalyzes the recognition and processing of DNA lesions. UvrC both incises the 5' and 3' sides of the lesion. The N-terminal half is responsible for the 3' incision and the C-terminal half is responsible for the 5' incision. This is UvrABC system protein C from Yersinia enterocolitica serotype O:8 / biotype 1B (strain NCTC 13174 / 8081).